A 1161-amino-acid polypeptide reads, in one-letter code: Lateral signaling target protein 2 homolog (1161 aa).

Disordered regions lie at residues 417–510, 583–831, 890–918, 935–978, 992–1014, and 1029–1095; these read ATGS…EVDD, AAGS…PTQS, MNSS…HNHP, DQQN…SVES, SSPV…TGQE, and GKAS…EPPR. The segment covering 419 to 429 has biased composition (gly residues); that stretch reads GSSGFGSGRGG. The segment covering 438–453 has biased composition (basic residues); the sequence is PKQRHNQAHLRQRGAP. The span at 468-487 shows a compositional bias: basic and acidic residues; that stretch reads GDDREPVVEEDNNNHLRKEI. Over residues 488–510 the composition is skewed to acidic residues; it reads EEEDVDDDMEEEEEDEEEDEVDD. Over residues 583–601 the composition is skewed to low complexity; sequence AAGSGGQQQQQQQQQLIDS. The span at 669–704 shows a compositional bias: acidic residues; the sequence is SDYEEADVDDEPDDVDADDDDEEEDDVVGEVEEQND. The segment covering 728-742 has biased composition (basic residues); it reads KAARNHRKSSHHRPR. The span at 743–757 shows a compositional bias: low complexity; the sequence is PSTSSSSSSAAYRNK. Basic residues predominate over residues 758–773; the sequence is SQSHQHHHHHHHHHHH. Composition is skewed to low complexity over residues 781-800 and 807-831; these read GTSS…SNGS and MQQQ…PTQS. Over residues 896 to 910 the composition is skewed to acidic residues; that stretch reads EPDEPPEPSGSEEES. Composition is skewed to polar residues over residues 935–948 and 956–967; these read DQQN…QSIY and EQDSVFGSSGDS. The segment covering 996–1010 has biased composition (gly residues); that stretch reads GAGGAGGGGMVGGSR. Positions 1054 to 1065 are enriched in low complexity; that stretch reads SRSSPSSPVNSN. Residues 1081-1094 show a composition bias toward basic and acidic residues; that stretch reads TAHEQQRRMPEEPP. An FYVE-type zinc finger spans residues 1099–1159; sequence DCDAPRCMAC…VCRDCYIHEV (61 aa). Zn(2+) contacts are provided by Cys1105, Cys1108, Cys1121, Cys1124, Cys1129, Cys1132, Cys1151, and Cys1154.

This sequence belongs to the lst-2 family.

Negative regulator of epidermal growth factor receptor (EGFR) signaling. The sequence is that of Lateral signaling target protein 2 homolog from Anopheles gambiae (African malaria mosquito).